The chain runs to 537 residues: Tegument protein BRRF2 (537 aa).

4 disordered regions span residues 321–366, 378–398, 414–466, and 486–537; these read RPRF…AVPP, AKQNRGGMGSLHLAKPEETSP, SKQH…DEEF, and GLRV…LSVV. The span at 334-347 shows a compositional bias: polar residues; sequence EPQQTCSQLTSRGN. The segment covering 423-441 has biased composition (low complexity); sequence SSQAAPSFSSVAPVASLSG. Residues 492–517 are compositionally biased toward acidic residues; the sequence is DEDEDGSEDGEFSDLDLSDSDHEGDE.

It belongs to the lymphocryptovirus BRRF2 family.

The protein resides in the virion tegument. The sequence is that of Tegument protein BRRF2 from Homo sapiens (Human).